Reading from the N-terminus, the 521-residue chain is GMP synthase [glutamine-hydrolyzing] (521 aa).

The region spanning 5–197 (KILILDFGSQ…VLDICGAQPG (193 aa)) is the Glutamine amidotransferase type-1 domain. C81 functions as the Nucleophile in the catalytic mechanism. Residues H171 and E173 contribute to the active site. Residues 198 to 390 (WTMPNYIEEA…LGLPREMVYR (193 aa)) enclose the GMPS ATP-PPase domain. ATP is bound at residue 225–231 (SGGVDSS).

As to quaternary structure, homodimer.

The catalysed reaction is XMP + L-glutamine + ATP + H2O = GMP + L-glutamate + AMP + diphosphate + 2 H(+). The protein operates within purine metabolism; GMP biosynthesis; GMP from XMP (L-Gln route): step 1/1. In terms of biological role, catalyzes the synthesis of GMP from XMP. This chain is GMP synthase [glutamine-hydrolyzing], found in Neisseria gonorrhoeae (strain ATCC 700825 / FA 1090).